We begin with the raw amino-acid sequence, 356 residues long: Riboflavin biosynthesis protein RibD (356 aa).

The segment at 1 to 148 (MIREIDKNYM…EDFFTYITQE (148 aa)) is deaminase. A CMP/dCMP-type deaminase domain is found at 4–126 (EIDKNYMKLA…KLRNAGIEVD (123 aa)). His-53 is a binding site for Zn(2+). Glu-55 acts as the Proton donor in catalysis. Residues Cys-78 and Cys-87 each coordinate Zn(2+). A reductase region spans residues 149–356 (RPYITLKWAQ…EDLVIFFKRY (208 aa)). Residue Ala-157 coordinates NADP(+). Ser-171 is a binding site for substrate. NADP(+) is bound at residue Trp-173. Arg-187 lines the substrate pocket. 2 residues coordinate NADP(+): Thr-199 and Asp-203. Residues Leu-207, Arg-210, and Glu-290 each contribute to the substrate site. 292–298 (GPRTLTS) contacts NADP(+).

It in the N-terminal section; belongs to the cytidine and deoxycytidylate deaminase family. This sequence in the C-terminal section; belongs to the HTP reductase family. Zn(2+) is required as a cofactor.

The enzyme catalyses 2,5-diamino-6-hydroxy-4-(5-phosphoribosylamino)-pyrimidine + H2O + H(+) = 5-amino-6-(5-phospho-D-ribosylamino)uracil + NH4(+). It catalyses the reaction 5-amino-6-(5-phospho-D-ribitylamino)uracil + NADP(+) = 5-amino-6-(5-phospho-D-ribosylamino)uracil + NADPH + H(+). It functions in the pathway cofactor biosynthesis; riboflavin biosynthesis; 5-amino-6-(D-ribitylamino)uracil from GTP: step 2/4. The protein operates within cofactor biosynthesis; riboflavin biosynthesis; 5-amino-6-(D-ribitylamino)uracil from GTP: step 3/4. In terms of biological role, converts 2,5-diamino-6-(ribosylamino)-4(3h)-pyrimidinone 5'-phosphate into 5-amino-6-(ribosylamino)-2,4(1h,3h)-pyrimidinedione 5'-phosphate. In Aquifex aeolicus (strain VF5), this protein is Riboflavin biosynthesis protein RibD (ribD).